A 112-amino-acid chain; its full sequence is Integration host factor subunit alpha (112 aa).

Belongs to the bacterial histone-like protein family. As to quaternary structure, heterodimer of an alpha and a beta chain.

In terms of biological role, this protein is one of the two subunits of integration host factor, a specific DNA-binding protein that functions in genetic recombination as well as in transcriptional and translational control. The sequence is that of Integration host factor subunit alpha from Rhizobium leguminosarum bv. trifolii (strain WSM2304).